Reading from the N-terminus, the 125-residue chain is Protein ApaG (125 aa).

In terms of domain architecture, ApaG spans 1–125; that stretch reads MINSPRVCVQ…FRLAVPTLIH (125 aa).

This is Protein ApaG from Klebsiella pneumoniae (strain 342).